Here is a 306-residue protein sequence, read N- to C-terminus: Phospho-N-acetylmuramoyl-pentapeptide-transferase (306 aa).

The next 10 membrane-spanning stretches (helical) occupy residues 1–21 (MDIY…IIFP), 49–69 (GTPT…GLIL), 75–95 (LIFT…VSIV), 104–124 (AWQK…TILQ), 130–150 (IFGI…LVSG), 160–180 (GIDG…MFFS), 182–202 (SSME…FLVY), 209–229 (VFMG…YALM), 234–254 (LSLL…ILQV), and 284–304 (IVGV…AFFL).

Belongs to the glycosyltransferase 4 family. MraY subfamily. Requires Mg(2+) as cofactor.

Its subcellular location is the cell inner membrane. It carries out the reaction UDP-N-acetyl-alpha-D-muramoyl-L-alanyl-gamma-D-glutamyl-meso-2,6-diaminopimeloyl-D-alanyl-D-alanine + di-trans,octa-cis-undecaprenyl phosphate = di-trans,octa-cis-undecaprenyl diphospho-N-acetyl-alpha-D-muramoyl-L-alanyl-D-glutamyl-meso-2,6-diaminopimeloyl-D-alanyl-D-alanine + UMP. It functions in the pathway cell wall biogenesis; peptidoglycan biosynthesis. Its function is as follows. Catalyzes the initial step of the lipid cycle reactions in the biosynthesis of the cell wall peptidoglycan: transfers peptidoglycan precursor phospho-MurNAc-pentapeptide from UDP-MurNAc-pentapeptide onto the lipid carrier undecaprenyl phosphate, yielding undecaprenyl-pyrophosphoryl-MurNAc-pentapeptide, known as lipid I. The sequence is that of Phospho-N-acetylmuramoyl-pentapeptide-transferase from Fervidobacterium nodosum (strain ATCC 35602 / DSM 5306 / Rt17-B1).